The chain runs to 48 residues: MAVPKRRVSKTRAAKRRTHYKVSLPIPVKDKDGSWKLPHRINTKTGEY.

The segment covering 1-20 (MAVPKRRVSKTRAAKRRTHY) has biased composition (basic residues). Positions 1-48 (MAVPKRRVSKTRAAKRRTHYKVSLPIPVKDKDGSWKLPHRINTKTGEY) are disordered.

This sequence belongs to the bacterial ribosomal protein bL32 family.

The chain is Large ribosomal subunit protein bL32 from Campylobacter hominis (strain ATCC BAA-381 / DSM 21671 / CCUG 45161 / LMG 19568 / NCTC 13146 / CH001A).